A 440-amino-acid chain; its full sequence is Eukaryotic translation initiation factor 3 subunit E (440 aa).

Residues 219–392 enclose the PCI domain; the sequence is VYFNYPKGRD…GQVVMGAKTT (174 aa).

The protein belongs to the eIF-3 subunit E family. Component of the eukaryotic translation initiation factor 3 (eIF-3) complex.

The protein localises to the cytoplasm. Functionally, component of the eukaryotic translation initiation factor 3 (eIF-3) complex, which is involved in protein synthesis of a specialized repertoire of mRNAs and, together with other initiation factors, stimulates binding of mRNA and methionyl-tRNAi to the 40S ribosome. The eIF-3 complex specifically targets and initiates translation of a subset of mRNAs involved in cell proliferation. In Brugia malayi (Filarial nematode worm), this protein is Eukaryotic translation initiation factor 3 subunit E.